The sequence spans 336 residues: Dihydroorotate dehydrogenase (quinone) (336 aa).

FMN-binding positions include 62-66 and T86; that span reads AGLDK. Residue K66 participates in substrate binding. 111–115 is a substrate binding site; it reads NRMGF. FMN-binding residues include N139 and N172. N172 is a binding site for substrate. The active-site Nucleophile is S175. A substrate-binding site is contributed by N177. 2 residues coordinate FMN: K217 and T245. 246–247 contributes to the substrate binding site; the sequence is NT. FMN-binding positions include G268, G297, and 318–319; that span reads YS.

The protein belongs to the dihydroorotate dehydrogenase family. Type 2 subfamily. In terms of assembly, monomer. The cofactor is FMN.

It localises to the cell membrane. The catalysed reaction is (S)-dihydroorotate + a quinone = orotate + a quinol. The protein operates within pyrimidine metabolism; UMP biosynthesis via de novo pathway; orotate from (S)-dihydroorotate (quinone route): step 1/1. Catalyzes the conversion of dihydroorotate to orotate with quinone as electron acceptor. This is Dihydroorotate dehydrogenase (quinone) from Aliivibrio fischeri (strain MJ11) (Vibrio fischeri).